Reading from the N-terminus, the 58-residue chain is Small ribosomal subunit protein bS21A (58 aa).

The tract at residues 38 to 58 (YEKPSLRRKRKAEAARKGGRN) is disordered. The segment covering 49 to 58 (AEAARKGGRN) has biased composition (basic and acidic residues).

This sequence belongs to the bacterial ribosomal protein bS21 family.

The chain is Small ribosomal subunit protein bS21A from Trichormus variabilis (strain ATCC 29413 / PCC 7937) (Anabaena variabilis).